Reading from the N-terminus, the 409-residue chain is Mitochondrial protein import protein MAS5 (409 aa).

Residues 1 to 172 (MVKETKFYDI…NGQGIKFVTR (172 aa)) form a necessary for HAP1 repression in the absence of heme region. One can recognise a J domain in the interval 4 to 72 (ETKFYDILGV…RDIYDQFGED (69 aa)). Substrate-binding positions include Ile-116 and 135–137 (LAL). The segment at 130 to 213 (GRTAKLALNK…CNGKKVENER (84 aa)) adopts a CR-type zinc-finger fold. Residues Cys-143, Cys-146, Cys-159, Cys-162, Cys-185, and Cys-188 each coordinate Zn(2+). CXXCXGXG motif repeat units follow at residues 143-150 (CKECEGRG), 159-166 (CTSCNGQG), and 185-192 (CDVCHGTG). Residue Lys-198 forms a Glycyl lysine isopeptide (Lys-Gly) (interchain with G-Cter in ubiquitin) linkage. Positions 201 and 204 each coordinate Zn(2+). The stretch at 201–208 (CKSCNGKK) is one CXXCXGXG motif repeat. Substrate is bound by residues 215–216 (IL) and 247–249 (VVF). The disordered stretch occupies residues 382-409 (RTRASRGGANYDSDEEEQGGEGVQCASQ). A Cysteine methyl ester modification is found at Cys-406. Cys-406 is lipidated: S-farnesyl cysteine. Positions 407–409 (ASQ) are cleaved as a propeptide — removed in mature form.

Homodimer. Interacts with HAP1. Component of the HMC including HAP1, SRO9 and YDJ1.

The protein resides in the cytoplasm. It localises to the perinuclear region. Functionally, probably involved in mitochondrial protein import. Is also required for efficient translocation of pre-pro-alpha-factor. Involved in heme regulation of HAP1, as a component of the high-molecular-weight (HMC) complex. The chain is Mitochondrial protein import protein MAS5 (YDJ1) from Saccharomyces cerevisiae (strain ATCC 204508 / S288c) (Baker's yeast).